The following is a 180-amino-acid chain: Large ribosomal subunit protein uL15 (180 aa).

A disordered region spans residues M1–Q62. The span at G35–G44 shows a compositional bias: basic residues.

It belongs to the universal ribosomal protein uL15 family. Part of the 50S ribosomal subunit.

Its function is as follows. Binds to the 23S rRNA. The protein is Large ribosomal subunit protein uL15 of Leptospira borgpetersenii serovar Hardjo-bovis (strain JB197).